Reading from the N-terminus, the 424-residue chain is Inhibin beta A chain (424 aa).

A signal peptide spans 1-20 (MPLLWKRGFLLVICWIIVRS). A propeptide spanning residues 21 to 308 (SPTPGSEGHS…EDRQHRRRER (288 aa)) is cleaved from the precursor. A glycan (N-linked (GlcNAc...) asparagine) is linked at Asn165. Disordered stretches follow at residues 178–200 (QQRQ…LKGE) and 260–288 (KKKK…QSHR). Basic and acidic residues predominate over residues 263-275 (KEDDGEGKEKDGG). Cystine bridges form between Cys312-Cys320, Cys319-Cys389, Cys348-Cys421, and Cys352-Cys423.

This sequence belongs to the TGF-beta family. Dimeric, linked by one or more disulfide bonds. Inhibin A is a dimer of alpha and beta-A. Inhibin B is a dimer of alpha and beta-B. Activin A is a homodimer of beta-A. Activin B is a homodimer of beta-B. Activin AB is a dimer of beta-A and beta-B. Ciliary ganglion neurons. Levels are higher in the choroid than the iris.

It is found in the secreted. Functionally, inhibins and activins inhibit and activate, respectively, the secretion of follitropin by the pituitary gland. Inhibins/activins are involved in regulating a number of diverse functions such as hypothalamic and pituitary hormone secretion, gonadal hormone secretion, germ cell development and maturation, erythroid differentiation, insulin secretion, nerve cell survival, embryonic axial development or bone growth, depending on their subunit composition. Inhibins appear to oppose the functions of activins. Induces somatostatin in the ciliary ganglion neurons and may play a role in regulating neurotransmitter phenotype. The sequence is that of Inhibin beta A chain (INHBA) from Gallus gallus (Chicken).